Consider the following 226-residue polypeptide: Large ribosomal subunit protein uL1 (226 aa).

It belongs to the universal ribosomal protein uL1 family. Part of the 50S ribosomal subunit.

Functionally, binds directly to 23S rRNA. The L1 stalk is quite mobile in the ribosome, and is involved in E site tRNA release. Protein L1 is also a translational repressor protein, it controls the translation of the L11 operon by binding to its mRNA. This Buchnera aphidicola subsp. Cinara cedri (strain Cc) protein is Large ribosomal subunit protein uL1.